A 218-amino-acid polypeptide reads, in one-letter code: NADH dehydrogenase [ubiquinone] iron-sulfur protein 7, mitochondrial (218 aa).

Residues 34–48 (LPALSPSTSPTSYTR) show a composition bias toward low complexity. Residues 34-61 (LPALSPSTSPTSYTRPGPPSTSPPPPGL) are disordered. A compositionally biased stretch (pro residues) spans 49 to 60 (PGPPSTSPPPPG). [4Fe-4S] cluster is bound by residues cysteine 93, cysteine 94, cysteine 158, and cysteine 188.

Belongs to the complex I 20 kDa subunit family. As to quaternary structure, complex I is composed of at least 49 different subunits. This is a component of the iron-sulfur (IP) fragment of the enzyme. Requires [4Fe-4S] cluster as cofactor.

It localises to the mitochondrion. It carries out the reaction a ubiquinone + NADH + 5 H(+)(in) = a ubiquinol + NAD(+) + 4 H(+)(out). Its function is as follows. Core subunit of the mitochondrial membrane respiratory chain NADH dehydrogenase (Complex I) that is believed to belong to the minimal assembly required for catalysis. Complex I functions in the transfer of electrons from NADH to the respiratory chain. The immediate electron acceptor for the enzyme is believed to be ubiquinone. The chain is NADH dehydrogenase [ubiquinone] iron-sulfur protein 7, mitochondrial from Arabidopsis thaliana (Mouse-ear cress).